Reading from the N-terminus, the 287-residue chain is Uroplakin-3a (287 aa).

A signal peptide spans 1 to 18 (MPPLWVVLALGCLRLGSG). Over 19–207 (VNLQPQLASV…DTWPGRRSGG (189 aa)) the chain is Lumenal. N-linked (GlcNAc...) asparagine glycans are attached at residues N74, N139, and N170. The helical transmembrane segment at 208–235 (MIVITSILGSLPFFLLIGFAGAIVLSLV) threads the bilayer. Residues 236–287 (DRGDADGATSHDSQITQEAVPKSLGTSEPSYTSVNRGPSLDRAEVYASKLQD) lie on the Cytoplasmic side of the membrane. Positions 243–274 (ATSHDSQITQEAVPKSLGTSEPSYTSVNRGPS) are disordered. The span at 259 to 271 (LGTSEPSYTSVNR) shows a compositional bias: polar residues.

The protein belongs to the uroplakin-3 family. In terms of assembly, heterodimer with uroplakin-1B (UPK1B). As to expression, bladder epithelium.

Its subcellular location is the endoplasmic reticulum membrane. Its function is as follows. Component of the asymmetric unit membrane (AUM); a highly specialized biomembrane elaborated by terminally differentiated urothelial cells. May play an important role in AUM-cytoskeleton interaction in terminally differentiated urothelial cells. It also contributes to the formation of urothelial glycocalyx which may play an important role in preventing bacterial adherence. This Bos taurus (Bovine) protein is Uroplakin-3a (UPK3A).